The primary structure comprises 140 residues: Large ribosomal subunit protein uL16 (140 aa).

The disordered stretch occupies residues 1–24 (MALAPARTKYRKSQKGSRAGNAKR).

It belongs to the universal ribosomal protein uL16 family. As to quaternary structure, part of the 50S ribosomal subunit.

In terms of biological role, binds 23S rRNA and is also seen to make contacts with the A and possibly P site tRNAs. The protein is Large ribosomal subunit protein uL16 of Opitutus terrae (strain DSM 11246 / JCM 15787 / PB90-1).